Reading from the N-terminus, the 131-residue chain is MFARRAISIFAFMLVALSIFAAATPLDARTNPTVTVTVTAPGSTATIPAGQCNVSNQQCCNSVQSASSTPVSVILGLLGIVLQDLNVLVGLTCSPITVIGGGNGGCNANPVCCQNNSFGSLISIGCIPISL.

The signal sequence occupies residues 1–23 (MFARRAISIFAFMLVALSIFAAA). 4 cysteine pairs are disulfide-bonded: cysteine 52/cysteine 112, cysteine 59/cysteine 106, cysteine 60/cysteine 93, and cysteine 113/cysteine 126. A glycan (N-linked (GlcNAc...) asparagine) is linked at asparagine 53. Asparagine 115 carries N-linked (GlcNAc...) asparagine glycosylation.

It belongs to the fungal hydrophobin family. As to quaternary structure, self-assembles to form functional amyloid fibrils called rodlets. Self-assembly into fibrillar rodlets occurs spontaneously at hydrophobic:hydrophilic interfaces and the rodlets further associate laterally to form amphipathic monolayers.

Its subcellular location is the secreted. It is found in the cell wall. Aerial growth, conidiation, and dispersal of filamentous fungi in the environment rely upon a capability of their secreting small amphipathic proteins called hydrophobins (HPBs) with low sequence identity. Class I can self-assemble into an outermost layer of rodlet bundles on aerial cell surfaces, conferring cellular hydrophobicity that supports fungal growth, development and dispersal; whereas Class II form highly ordered films at water-air interfaces through intermolecular interactions but contribute nothing to the rodlet structure. The sequence is that of Class I hydrophobin 9 from Flammulina velutipes (Agaricus velutipes).